We begin with the raw amino-acid sequence, 1187 residues long: Roquin-2 (1187 aa).

The Zn(2+) site is built by C14, C17, C33, H35, C38, C50, and D53. The segment at 14-54 (CPICYNEFDENVHKPISLGCSHTVCKTCLNKLHRKACPFDQ) adopts an RING-type; degenerate zinc-finger fold. Residues 91 to 170 (ENKHYEVAKK…RTVTELILQH (80 aa)) are HEPN-N. Positions 171-325 (QNPQQLSANL…SIIDKLQSPE (155 aa)) are ROQ. Positions 326 to 396 (SFAKSVQELT…GLVDFIQNYS (71 aa)) are HEPN-C. The C3H1-type zinc-finger motif lies at 410–438 (KYKTSMCRDLRQQGGCPRGTNCTFAHSQE). 2 disordered regions span residues 527-571 (VGTN…GTEL) and 640-677 (NVPESSLPPASMPYADHYSTFSPRDRMNSSPYQPPPPQ). Over residues 529 to 545 (TNAQNAGPSAESVSENK) the composition is skewed to polar residues. S548 is modified (phosphoserine). Residues 553-571 (PVSNAAATSAGPSNFGTEL) show a composition bias toward polar residues. Residues S806, S981, and S1115 each carry the phosphoserine modification.

As to quaternary structure, interacts with EDC4. Interacts with CCR4-NOT deadenylase complex. Interacts with MAP3K5; the interaction is probably stimulus-dependent. Post-translationally, proteolytically cleaved by MALT1 in activated CD4(+) T cells; cleavage at Arg-509 is critical for promoting RC3H1 degradation in response to T-cell receptor (TCR) stimulation, and hence is necessary for prolonging the stability of a set of mRNAs controlling Th17 cell differentiation. As to expression, highest levels in lymph node and thymus and slightly lesser amounts in brain, lung, and spleen (at protein level). Very weak expression in heart, muscle, and kidney (at protein level). Expressed in CD4(+) helper T-cells (at protein level).

The protein localises to the cytoplasm. It is found in the P-body. It catalyses the reaction S-ubiquitinyl-[E2 ubiquitin-conjugating enzyme]-L-cysteine + [acceptor protein]-L-lysine = [E2 ubiquitin-conjugating enzyme]-L-cysteine + N(6)-ubiquitinyl-[acceptor protein]-L-lysine.. It functions in the pathway protein modification; protein ubiquitination. Its activity is regulated as follows. Binding to dsRNA, but not CDE RNA, crosstalks with the E3 ubiquitin ligase activity and may inhibit ubiquitination. Its function is as follows. Post-transcriptional repressor of mRNAs containing a conserved stem loop motif, called constitutive decay element (CDE), which is often located in the 3'-UTR, as in HMGXB3, ICOS, IER3, NFKBID, NFKBIZ, PPP1R10, TNF and in many more mRNAs. Binds to CDE and promotes mRNA deadenylation and degradation. This process does not involve miRNAs. In follicular helper T (Tfh) cells, represses of ICOS and TNFRSF4 expression, thus preventing spontaneous Tfh cell differentiation, germinal center B-cell differentiation in the absence of immunization and autoimmunity. In resting or LPS-stimulated macrophages, controls inflammation by suppressing TNF expression. Also recognizes CDE in its own mRNA and in that of paralogous RC3H1, possibly leading to feedback loop regulation. Inhibits cooperatively with ZC3H12A the differentiation of helper T cells Th17 in lungs. They repress target mRNA encoding the Th17 cell-promoting factors IL6, ICOS, REL, IRF4, NFKBID and NFKBIZ. The cooperation requires RNA-binding by RC3H1 and the nuclease activity of ZC3H12A. miRNA-binding protein that regulates microRNA homeostasis. Enhances DICER-mediated processing of pre-MIR146a but reduces mature MIR146a levels through an increase of 3' end uridylation. Both inhibits ICOS mRNA expression and they may act together to exert the suppression. Acts as a ubiquitin E3 ligase. Pairs with E2 enzymes UBE2B, UBE2D2, UBE2E2, UBE2E3, UBE2G2, UBE2K and UBE2Q2 and produces polyubiquitin chains. Shows the strongest activity when paired with UBE2N:UBE2V1 or UBE2N:UBE2V2 E2 complexes and generate both short and long polyubiquitin chains. Involved in the ubiquitination of MAP3K5. Able to interact with double-stranded RNA (dsRNA). This chain is Roquin-2 (Rc3h2), found in Mus musculus (Mouse).